The following is a 237-amino-acid chain: RNA chaperone ProQ (237 aa).

The interval 106–188 (AKARVQAQRA…QPRPVPVTDI (83 aa)) is disordered. A compositionally biased stretch (basic and acidic residues) spans 146–158 (PRREAGAAPENRK).

The protein belongs to the ProQ family.

It localises to the cytoplasm. Functionally, RNA chaperone with significant RNA binding, RNA strand exchange and RNA duplexing activities. May regulate ProP activity through an RNA-based, post-transcriptional mechanism. This Yersinia pseudotuberculosis serotype O:1b (strain IP 31758) protein is RNA chaperone ProQ.